We begin with the raw amino-acid sequence, 322 residues long: MSFRDALNLPSSEITDESVYRDRRRLLQLLALTPALGVAGCAEADPPPPPKTVVTPAQARSGFRTAEELTRLEDVTSYNNFYEFGTDKTDPSKAAKTLKLSPWTVKVGGECEKPGSLSLDELLKGIASEERIYRLRCVEGWSMVIPWTGVPLGEVLKRFAPTSKAKYVAFTTLADPQQMPGVRYRSINWPYREGLRIDEAMHPLTLLATGLYGKPLPQQNGAPLRLVVPWKYGFKSIKSIVEIRFVEKMPETAWHDLQPSEYGFFSNVNPAVDHPRWSQKTERRIAGTASKLFAERIATKPFNGYADQVASLYAGMDLKKWF.

A signal peptide (tat-type signal) is located at residues 1–59 (MSFRDALNLPSSEITDESVYRDRRRLLQLLALTPALGVAGCAEADPPPPPKTVVTPAQA). Residues Asn79, 82–83 (YE), Cys137, Thr172, Asn220, Arg225, and 236–238 (SIK) each bind Mo-molybdopterin.

Belongs to the MsrP family. As to quaternary structure, heterodimer of a catalytic subunit (MsrP) and a heme-binding subunit (MsrQ). Mo-molybdopterin serves as cofactor. In terms of processing, predicted to be exported by the Tat system. The position of the signal peptide cleavage has not been experimentally proven.

The protein localises to the periplasm. It catalyses the reaction L-methionyl-[protein] + a quinone + H2O = L-methionyl-(S)-S-oxide-[protein] + a quinol. The catalysed reaction is L-methionyl-[protein] + a quinone + H2O = L-methionyl-(R)-S-oxide-[protein] + a quinol. Part of the MsrPQ system that repairs oxidized periplasmic proteins containing methionine sulfoxide residues (Met-O), using respiratory chain electrons. Thus protects these proteins from oxidative-stress damage caused by reactive species of oxygen and chlorine generated by the host defense mechanisms. MsrPQ is essential for the maintenance of envelope integrity under bleach stress, rescuing a wide series of structurally unrelated periplasmic proteins from methionine oxidation. The catalytic subunit MsrP is non-stereospecific, being able to reduce both (R-) and (S-) diastereoisomers of methionine sulfoxide. This is Protein-methionine-sulfoxide reductase catalytic subunit MsrP from Xanthomonas axonopodis pv. citri (strain 306).